We begin with the raw amino-acid sequence, 388 residues long: Dual-specificity RNA methyltransferase RlmN (388 aa).

The Proton acceptor role is filled by glutamate 109. One can recognise a Radical SAM core domain in the interval 115–354 (EDDRATLCVS…TIVRKTRGDD (240 aa)). Cysteines 122 and 359 form a disulfide. Cysteine 129, cysteine 133, and cysteine 136 together coordinate [4Fe-4S] cluster. S-adenosyl-L-methionine contacts are provided by residues 183-184 (GE), serine 215, 237-239 (SLH), and asparagine 316. Cysteine 359 (S-methylcysteine intermediate) is an active-site residue.

The protein belongs to the radical SAM superfamily. RlmN family. [4Fe-4S] cluster serves as cofactor.

The protein localises to the cytoplasm. The catalysed reaction is adenosine(2503) in 23S rRNA + 2 reduced [2Fe-2S]-[ferredoxin] + 2 S-adenosyl-L-methionine = 2-methyladenosine(2503) in 23S rRNA + 5'-deoxyadenosine + L-methionine + 2 oxidized [2Fe-2S]-[ferredoxin] + S-adenosyl-L-homocysteine. It catalyses the reaction adenosine(37) in tRNA + 2 reduced [2Fe-2S]-[ferredoxin] + 2 S-adenosyl-L-methionine = 2-methyladenosine(37) in tRNA + 5'-deoxyadenosine + L-methionine + 2 oxidized [2Fe-2S]-[ferredoxin] + S-adenosyl-L-homocysteine. In terms of biological role, specifically methylates position 2 of adenine 2503 in 23S rRNA and position 2 of adenine 37 in tRNAs. m2A2503 modification seems to play a crucial role in the proofreading step occurring at the peptidyl transferase center and thus would serve to optimize ribosomal fidelity. The sequence is that of Dual-specificity RNA methyltransferase RlmN from Salmonella typhimurium (strain LT2 / SGSC1412 / ATCC 700720).